Here is a 239-residue protein sequence, read N- to C-terminus: 7-cyano-7-deazaguanine synthase (239 aa).

Position 13–23 (13–23) interacts with ATP; it reads FSGGQDSTTCL. Zn(2+) contacts are provided by C201, C216, C219, and C222.

Belongs to the QueC family. Zn(2+) is required as a cofactor.

The enzyme catalyses 7-carboxy-7-deazaguanine + NH4(+) + ATP = 7-cyano-7-deazaguanine + ADP + phosphate + H2O + H(+). It functions in the pathway purine metabolism; 7-cyano-7-deazaguanine biosynthesis. In terms of biological role, catalyzes the ATP-dependent conversion of 7-carboxy-7-deazaguanine (CDG) to 7-cyano-7-deazaguanine (preQ(0)). In Bradyrhizobium sp. (strain BTAi1 / ATCC BAA-1182), this protein is 7-cyano-7-deazaguanine synthase.